A 1461-amino-acid polypeptide reads, in one-letter code: Periaxin (1461 aa).

Phosphoserine is present on Ser-7. The PDZ domain occupies 16 to 99; it reads LVEIIVETEA…YKVSFCLKRT (84 aa). A Nuclear export signal motif is present at residues 70 to 84; that stretch reads VFFENFKYEDALRLL. The Nuclear localization signal motif lies at 118 to 196; sequence KGPRAKVAKL…RLQLPRLRVR (79 aa). At Ser-133 the chain carries Phosphoserine. 55 repeat units span residues 431 to 435, 439 to 443, 447 to 451, 455 to 459, 463 to 467, 468 to 472, 473 to 477, 481 to 485, 486 to 490, 494 to 498, 499 to 503, 507 to 511, 512 to 516, 520 to 524, 525 to 529, 533 to 537, 538 to 542, 546 to 550, 551 to 555, 559 to 563, 564 to 568, 572 to 576, 577 to 581, 582 to 586, 590 to 594, 595 to 599, 600 to 604, 608 to 612, 613 to 617, 618 to 622, 626 to 630, 631 to 635, 636 to 640, 644 to 648, 649 to 653, 654 to 658, 662 to 666, 670 to 674, 675 to 679, 683 to 687, 688 to 692, 696 to 700, 701 to 705, 706 to 710, 714 to 718, 719 to 723, 724 to 728, 732 to 736, 737 to 741, 742 to 746, 750 to 754, 755 to 759, 760 to 764, 771 to 775, and 779 to 783. Residues 431–783 are 55 X 5 AA approximate tandem repeats of [LVMAG]-[PSREQC]-[EDKL]-[LIVMAP]-[AQKHRPE]; that may have a tripeptide spacer of [LV]-P-[KER]; that stretch reads GPEVKVPKGP…VKLPRAPEVQ (353 aa). 2 positions are modified to phosphoserine: Ser-900 and Ser-1082. Residues 1318–1327 are compositionally biased toward basic and acidic residues; sequence EGAEEGEKAK. The interval 1318–1461 is disordered; that stretch reads EGAEEGEKAK…RMEGAQAAAV (144 aa). Phosphoserine occurs at positions 1349, 1351, 1363, 1401, 1407, and 1439. The span at 1352-1363 shows a compositional bias: acidic residues; it reads PEEEEEEEEEGS.

It belongs to the periaxin family. As to quaternary structure, homodimer (via PDZ domain). Interacts with SCN10A. Found in a complex with SCN10A. Interacts with DRP2. Identified in a dystroglycan complex that contains at least PRX, DRP2, UTRN, DMD and DAG1. Detected in a complex composed of at least EZR, AHNAK, PPL and PRX. Identified in a complex with EZR, AHNAK, BFSP1, BFSP2, ANK2, PLEC, VIM and spectrin. Detected in spinal cord. Isoform 1 and isoform 2 are found in sciatic nerve and Schwann cells.

Its subcellular location is the cell membrane. The protein localises to the nucleus. The protein resides in the cytoplasm. It localises to the cell junction. In terms of biological role, scaffolding protein that functions as part of a dystroglycan complex in Schwann cells, and as part of EZR and AHNAK-containing complexes in eye lens fiber cells. Required for the maintenance of the peripheral myelin sheath that is essential for normal transmission of nerve impulses and normal perception of sensory stimuli. Required for normal transport of MBP mRNA from the perinuclear to the paranodal regions. Required for normal remyelination after nerve injury. Required for normal elongation of Schwann cells and normal length of the internodes between the nodes of Ranvier. The demyelinated nodes of Ranvier permit saltatory transmission of nerve impulses; shorter internodes cause slower transmission of nerve impulses. Required for the formation of appositions between the abaxonal surface of the myelin sheath and the Schwann cell plasma membrane; the Schwann cell cytoplasm is restricted to regions between these appositions. Required for the formation of Cajal bands and of Schmidt-Lanterman incisures that correspond to short, cytoplasm-filled regions on myelinated nerves. Recruits DRP2 to the Schwann cell plasma membrane. Required for normal protein composition of the eye lens fiber cell plasma membrane and normal eye lens fiber cell morphology. This Homo sapiens (Human) protein is Periaxin (PRX).